Reading from the N-terminus, the 457-residue chain is Cysteine--tRNA ligase (457 aa).

A Zn(2+)-binding site is contributed by Cys27. The 'HIGH' region motif lies at 29–39 (PTVYDFAHIGN). Cys211, His236, and Glu240 together coordinate Zn(2+). Positions 269–273 (KMSKS) match the 'KMSKS' region motif. ATP is bound at residue Lys272.

This sequence belongs to the class-I aminoacyl-tRNA synthetase family. In terms of assembly, monomer. Zn(2+) serves as cofactor.

The protein resides in the cytoplasm. The catalysed reaction is tRNA(Cys) + L-cysteine + ATP = L-cysteinyl-tRNA(Cys) + AMP + diphosphate. This Ehrlichia ruminantium (strain Gardel) protein is Cysteine--tRNA ligase.